A 137-amino-acid chain; its full sequence is Phosphoribosyl-AMP cyclohydrolase (137 aa).

Aspartate 84 lines the Mg(2+) pocket. Residue cysteine 85 coordinates Zn(2+). Residues aspartate 86 and aspartate 88 each coordinate Mg(2+). Zn(2+) contacts are provided by cysteine 101 and cysteine 108.

This sequence belongs to the PRA-CH family. As to quaternary structure, homodimer. Mg(2+) is required as a cofactor. The cofactor is Zn(2+).

It localises to the cytoplasm. It catalyses the reaction 1-(5-phospho-beta-D-ribosyl)-5'-AMP + H2O = 1-(5-phospho-beta-D-ribosyl)-5-[(5-phospho-beta-D-ribosylamino)methylideneamino]imidazole-4-carboxamide. It functions in the pathway amino-acid biosynthesis; L-histidine biosynthesis; L-histidine from 5-phospho-alpha-D-ribose 1-diphosphate: step 3/9. Its function is as follows. Catalyzes the hydrolysis of the adenine ring of phosphoribosyl-AMP. This chain is Phosphoribosyl-AMP cyclohydrolase, found in Chlorobium chlorochromatii (strain CaD3).